The primary structure comprises 196 residues: Large ribosomal subunit protein eL15 (196 aa).

The segment covering 162–172 (RGKTSAGRRAR) has biased composition (basic residues). Positions 162–196 (RGKTSAGRRARGLQNRGKGTEGLRPSTNADKRNKS) are disordered.

This sequence belongs to the eukaryotic ribosomal protein eL15 family.

This chain is Large ribosomal subunit protein eL15, found in Halobacterium salinarum (strain ATCC 29341 / DSM 671 / R1).